The sequence spans 56 residues: Sperm protamine P1 (56 aa).

A disordered region spans residues 1–56 (RLSRRRVYSIGGRRRRRRRRSRGRRGRRRGRRRGRRRGRRRGRRRRRRRGGRRRRR).

Post-translationally, P2 is phosphorylated in immature sperm. It is dephosphorylated in mature sperm allowing a stronger interaction with DNA. Testis.

It is found in the nucleus. Its subcellular location is the chromosome. Its function is as follows. Protamines substitute for histones in the chromatin of sperm during the haploid phase of spermatogenesis. They compact sperm DNA into a highly condensed, stable and inactive complex. In terms of biological role, octopus spermiogenesis is characterized by a double nuclear protein transition: Histones are first replaced by P1, which allows the chromatin to adopt a shape that is not as relaxed as with histones. The majority of P1 is later replaced by P2, forming a compact chromatin. P2 is the main protamine of sperm. This is Sperm protamine P1 from Octopus vulgaris (Common octopus).